Reading from the N-terminus, the 129-residue chain is Follitropin subunit beta (129 aa).

Positions 1-19 are cleaved as a signal peptide; it reads MKSVQFCFLFCCWRAICCR. 6 cysteine pairs are disulfide-bonded: cysteine 21/cysteine 69, cysteine 35/cysteine 84, cysteine 38/cysteine 122, cysteine 46/cysteine 100, cysteine 50/cysteine 102, and cysteine 105/cysteine 112. N-linked (GlcNAc...) asparagine glycans are attached at residues asparagine 25 and asparagine 42.

Belongs to the glycoprotein hormones subunit beta family. As to quaternary structure, heterodimer. The active follitropin is a heterodimer composed of an alpha chain/CGA shared with other hormones and a unique beta chain/FSHB shown here.

It is found in the secreted. Together with the alpha chain CGA constitutes follitropin, the follicle-stimulating hormone, and provides its biological specificity to the hormone heterodimer. Binds FSHR, a G protein-coupled receptor, on target cells to activate downstream signaling pathways. Follitropin is involved in follicle development and spermatogenesis in reproductive organs. This chain is Follitropin subunit beta (FSHB), found in Ovis aries (Sheep).